The following is a 148-amino-acid chain: ASCH domain-containing ribonuclease (148 aa).

One can recognise an ASCH domain in the interval 13-70 (SLWPEFAKAIVSGKKTVEFRRRIPLPALSARIWIYATRPVKSVIGFAYLEAIVQGDVN).

Mn(2+) is required as a cofactor. It depends on Ni(2+) as a cofactor.

Shows sequence-specific endoribonuclease activity towards single-stranded RNA (ssRNA), with a preference for the bond between pyrimidine and adenine nucleotides. May also have 5'-exonuclease activity. The polypeptide is ASCH domain-containing ribonuclease (Zymomonas mobilis subsp. mobilis (strain ATCC 10988 / DSM 424 / LMG 404 / NCIMB 8938 / NRRL B-806 / ZM1)).